The following is a 378-amino-acid chain: Erythronate-4-phosphate dehydrogenase (378 aa).

Positions 45 and 66 each coordinate substrate. The NAD(+) site is built by Asp-146 and Thr-175. Arg-208 is an active-site residue. An NAD(+)-binding site is contributed by Asp-232. Glu-237 is a catalytic residue. Catalysis depends on His-254, which acts as the Proton donor. Gly-257 is an NAD(+) binding site. A substrate-binding site is contributed by Tyr-258.

This sequence belongs to the D-isomer specific 2-hydroxyacid dehydrogenase family. PdxB subfamily. Homodimer.

The protein resides in the cytoplasm. The enzyme catalyses 4-phospho-D-erythronate + NAD(+) = (R)-3-hydroxy-2-oxo-4-phosphooxybutanoate + NADH + H(+). The protein operates within cofactor biosynthesis; pyridoxine 5'-phosphate biosynthesis; pyridoxine 5'-phosphate from D-erythrose 4-phosphate: step 2/5. Its function is as follows. Catalyzes the oxidation of erythronate-4-phosphate to 3-hydroxy-2-oxo-4-phosphonooxybutanoate. This chain is Erythronate-4-phosphate dehydrogenase, found in Escherichia coli (strain ATCC 8739 / DSM 1576 / NBRC 3972 / NCIMB 8545 / WDCM 00012 / Crooks).